The sequence spans 90 residues: Conotoxin TxMMSK-06 (90 aa).

The N-terminal stretch at Met-1–Pro-22 is a signal peptide. A propeptide spanning residues Leu-23 to Arg-74 is cleaved from the precursor. The disordered stretch occupies residues Asp-24–Glu-43. Residues Gly-25 to Glu-43 are compositionally biased toward basic and acidic residues. 3 disulfides stabilise this stretch: Cys-75-Cys-89, Cys-76-Cys-85, and Cys-81-Cys-88. Pro-87 carries the post-translational modification 4-hydroxyproline. Cys-89 is modified (cysteine amide).

The protein belongs to the conotoxin M superfamily. As to expression, expressed by the venom duct.

The protein resides in the secreted. This chain is Conotoxin TxMMSK-06, found in Conus textile (Cloth-of-gold cone).